The primary structure comprises 188 residues: Peptidyl-tRNA hydrolase (188 aa).

TRNA is bound at residue phenylalanine 14. Histidine 19 (proton acceptor) is an active-site residue. Residues tyrosine 64, asparagine 66, and asparagine 112 each contribute to the tRNA site.

The protein belongs to the PTH family. In terms of assembly, monomer.

The protein resides in the cytoplasm. It carries out the reaction an N-acyl-L-alpha-aminoacyl-tRNA + H2O = an N-acyl-L-amino acid + a tRNA + H(+). Hydrolyzes ribosome-free peptidyl-tRNAs (with 1 or more amino acids incorporated), which drop off the ribosome during protein synthesis, or as a result of ribosome stalling. Its function is as follows. Catalyzes the release of premature peptidyl moieties from peptidyl-tRNA molecules trapped in stalled 50S ribosomal subunits, and thus maintains levels of free tRNAs and 50S ribosomes. This Onion yellows phytoplasma (strain OY-M) protein is Peptidyl-tRNA hydrolase.